A 185-amino-acid chain; its full sequence is Translation initiation factor IF-3 (185 aa).

The protein belongs to the IF-3 family. In terms of assembly, monomer.

The protein localises to the cytoplasm. IF-3 binds to the 30S ribosomal subunit and shifts the equilibrium between 70S ribosomes and their 50S and 30S subunits in favor of the free subunits, thus enhancing the availability of 30S subunits on which protein synthesis initiation begins. In Rickettsia felis (strain ATCC VR-1525 / URRWXCal2) (Rickettsia azadi), this protein is Translation initiation factor IF-3.